The chain runs to 798 residues: Glycogen phosphorylase (798 aa).

Residue Lys-646 is modified to N6-(pyridoxal phosphate)lysine.

The protein belongs to the glycogen phosphorylase family. Requires pyridoxal 5'-phosphate as cofactor.

The enzyme catalyses [(1-&gt;4)-alpha-D-glucosyl](n) + phosphate = [(1-&gt;4)-alpha-D-glucosyl](n-1) + alpha-D-glucose 1-phosphate. In terms of biological role, phosphorylase is an important allosteric enzyme in carbohydrate metabolism. Enzymes from different sources differ in their regulatory mechanisms and in their natural substrates. However, all known phosphorylases share catalytic and structural properties. This chain is Glycogen phosphorylase (glgP), found in Bacillus subtilis (strain 168).